The sequence spans 440 residues: Glyceraldehyde-3-phosphate dehydrogenase, testis-specific (440 aa).

The tract at residues 1–105 (MSRRDVVLTN…PPPPPLQKPA (105 aa)) is testis-specific N-terminal extension. 2 stretches are compositionally biased toward pro residues: residues 40–75 (PPKLEDPPPTVEEQPPPPPPPPPPPPPPPPPPPPQI) and 83–102 (APPPPPPPPPPPPPPPPPLQ). Residues 40-106 (PPKLEDPPPT…PPPPLQKPAR (67 aa)) are disordered. Residues 117–118 (RI), D138, K183, Y205, and T225 each bind NAD(+). D-glyceraldehyde 3-phosphate contacts are provided by residues 255 to 257 (SCT), T286, 315 to 316 (TG), and R338. The active-site Nucleophile is C256. S358 is modified (phosphoserine). N420 is an NAD(+) binding site.

This sequence belongs to the glyceraldehyde-3-phosphate dehydrogenase family. Homotetramer. As to expression, testis specific.

It is found in the cytoplasm. The catalysed reaction is D-glyceraldehyde 3-phosphate + phosphate + NAD(+) = (2R)-3-phospho-glyceroyl phosphate + NADH + H(+). The protein operates within carbohydrate degradation; glycolysis; pyruvate from D-glyceraldehyde 3-phosphate: step 1/5. Its function is as follows. May play an important role in regulating the switch between different pathways for energy production during spermiogenesis and in the spermatozoon. Required for sperm motility and male fertility. The protein is Glyceraldehyde-3-phosphate dehydrogenase, testis-specific (Gapdhs) of Mus musculus (Mouse).